We begin with the raw amino-acid sequence, 1833 residues long: MKKEASELLGFSPQKDIVYNELLPYKDKLDDESNEILAQIKGNLGRAVQLREVWPGVLFWTRKLSTYIRLYGRKFNKEDHVLFVKLLYELVTIPKLEISMMQSFARLLITLLKKKELLSREDLELPWRPLYELQDRILYSKTEHLGLNWFPSSVEAVLKVLIKSCRPYFPESATQEMLDEWKPLMCPFDVTMQKAMGYFELFLPTTLPPELHDKGFKLWFDDLISLWVSVQNLPSWEVNLVSLFARLANDNIGYIDWDPYIPKIFTRILRSLNLPVGSSQMLVSRYLTNAYDISYVVIWISALLGGPSKQAQTQLSGLFNGITSFFHPSNHGRWLMKLMKLLQRLPASVVKRLHRERYRTPTWLTPIPESHLLSEQDITDFVESIKQPVLLAMFSKTGSLDAAQALQNLALLRPELVIPPVLEKTYPAMETLIEPHQLTATLSCMIGVARSLVAGGQRFPEGPKHMLPLLMRALPGVDPNDFSKCMITFQFLATFVTLVPLVDCSSAIHSRNGLTQVEKELCSASAEFEHFVLQFVDRCFALIDTSTLEQTREEMEMEKMTHLESLVELGLSSTFSTILTQCSMEIFQVALDKVFNFATTSIFETHVAGRMVADMCRATTKCHPAEALKLFLPHCCSAILQIAANEEVLNEEELDKELMWNLQLLSEVVRVDGDQLLLYRSQLVQILQLTLHLKCKQGYSLACKLLYHILRSMSLIYPREYCSIPGGIQQHTDTYLPIQDWGRPGELWNLEIQWHVPSTEETEFVFYLLDLLLKPELQRLQKHTEGQQDISRDDVLQSLSIVHNCFLGASSLLPPLHGEPVPQLINGMVQLYETKVYTGVDYDMSRENYREDICKVIRPLLNHTLEHSEDDIKSLFSIIKIINDLLHFKGSHKNEFDTRWKSFNLIKKSMENRLHGSKQHIRALLIDRVMLQHELRNLTMEGCSYRSVHQDLINDLLRLSTSRYSQVRCRAQNVLFTALGTYNFCCRDIIPVVLKYLDPERTDVTQQQFKGALYCLLGNHSGICLANLQYWDCIALTWPALVRSGMSPSMSLEKTSIVRLFDDLADKIHRQYETISVNFSIPESCVEIAVKMLKSSSPEPNPGAASEQEELEGRKREEQKNKDAMQKYEKLVADLLDCLHDRNIPWKFEQLTIGFLSLMLRDDLPLPSSAVLFFVESLNHDSLLVRNVAISAVAGILKQLKRPHKKVAVSPYDISELKTSLQSPVVSLLTGDRPDNQWLQYDSSRLPRSQRDWDECCFIEKTHWGYSTWPRKLMLYAPLEEQPKQGQTREEMNEREQIIYDHFSDQLFIDQFIQYLSLEDRKGKDKFSPRRFCLFKGLFRNFDDAFLPLLKPHMERLVADSHESPQRCVAEIISGLIRGSKHWSYSKVEKLWALLCPLLRKALSNITIETYIDWGTCIATACESRDPRKLHWLFEMLMESPVTGEGGSFVDACRLYVLQGGLAQQEWRVPELLHRLLQYLEPKLTQVYKNVRERIGSVLTYIFMIDVDLPYTQPTTSPRIREFTERVLARLKPLTEGEEEIQNHIVEENMEGDQDERTQAIKLLKTVLKWLMTSAGRSFSSSVPEQLRLLPLLFKIAPVENDDSYDEMKTDAKTCLSLMSQGLLYSDQIPQVLSALEEISRSSSWHARYTILTYLQIMVFYNLFTFLSDAKAVCDVRALVLRLLEDEQLEVREMAATTLSGFLQCNFLSIDEPMQAHFESLSKTRLPKRKRRELGSVVDTIPSADLVRRHAGVLGLSACILSSPYDVPTWMPQILMDLSAHLNDTQPIEMTVKKTLSDFRRTHHDNWQEHKQKFTDDQLLVLTDLLVSPCYYA.

2 HEAT repeats span residues 460–504 and 983–1022; these read PEGP…LVDC and NFCC…NHSG. The segment at 1095–1122 is disordered; the sequence is SSSPEPNPGAASEQEELEGRKREEQKNK. The span at 1111-1122 shows a compositional bias: basic and acidic residues; it reads LEGRKREEQKNK. HEAT repeat units lie at residues 1164–1202, 1344–1382, 1626–1664, and 1670–1708; these read LPLP…QLKR, DAFL…GSKH, SDQI…YNLF, and AKAV…CNFL. A bromodomain-like (BRDL) region spans residues 1640–1728; sequence SRSSSWHARY…ESLSKTRLPK (89 aa).

This sequence belongs to the BLM10 family. Homodimer. Interacts with the 20S and 26S proteasomes.

It is found in the cytoplasm. The protein localises to the cytosol. Its subcellular location is the nucleus. It localises to the nucleus speckle. Functionally, associated component of the proteasome that specifically recognizes acetylated histones and promotes ATP- and ubiquitin-independent degradation of core histones during DNA damage response. Recognizes and binds acetylated histones via its bromodomain-like (BRDL) region and activates the proteasome by opening the gated channel for substrate entry. Binds to the core proteasome via its C-terminus, which occupies the same binding sites as the proteasomal ATPases, opening the closed structure of the proteasome via an active gating mechanism. involved in DNA damage response in somatic cells: binds to acetylated histones and promotes degradation of histones. This Danio rerio (Zebrafish) protein is Proteasome activator complex subunit 4A (psme4a).